The sequence spans 908 residues: Glutamate receptor ionotropic, kainate 2 (908 aa).

A signal peptide spans 1–31 (MKIISPVLSNLVFSRSIKVLLCLLWIGYSQG). Topologically, residues 32-561 (TTHVLRFGGI…VFSFLNPLSP (530 aa)) are extracellular. N-linked (GlcNAc...) asparagine glycans are attached at residues asparagine 67, asparagine 73, asparagine 275, asparagine 378, asparagine 412, asparagine 423, and asparagine 430. A disulfide bridge connects residues cysteine 96 and cysteine 347. Residues proline 516, alanine 518, and arginine 523 each coordinate L-glutamate. Asparagine 546 carries an N-linked (GlcNAc...) asparagine glycan. The chain crosses the membrane as a helical span at residues 562–582 (DIWMYILLAYLGVSCVLFVIA). At 583–638 (RFSPYEWYNPHPCNPDSDVVENNFTLLNSFWFGVGALMQQGSELMPKALSTRIVGG) the chain is on the cytoplasmic side. A helical membrane pass occupies residues 639–659 (IWWFFTLIIISSYTANLAAFL). Residues 660–819 (TVERMESPID…KEASALGVQN (160 aa)) lie on the Extracellular side of the membrane. Positions 689, 690, and 738 each coordinate L-glutamate. An intrachain disulfide couples cysteine 750 to cysteine 804. Asparagine 751 carries an N-linked (GlcNAc...) asparagine glycan. Residues 820–840 (IGGIFIVLAAGLVLSVFVAVG) form a helical membrane-spanning segment. The Cytoplasmic segment spans residues 841–908 (EFLYKSKKNA…RRLPGKETMA (68 aa)). Phosphoserine; by PKC is present on residues serine 846 and serine 868. Lysine 886 participates in a covalent cross-link: Glycyl lysine isopeptide (Lys-Gly) (interchain with G-Cter in SUMO1).

It belongs to the glutamate-gated ion channel (TC 1.A.10.1) family. GRIK2 subfamily. As to quaternary structure, homotetramer and heterotetramer with GRIK5. Tetramers may be formed by the dimerization of dimers. Assembles into a kainate-gated homomeric channel that does not bind AMPA. Can form functional heteromeric receptors with GRIK4 and GRIK5. Can form functional heteromeric receptors with GRIK3. Interacts with DLG4. Interacts with NETO2. Interacts (via C-terminus) with KLHL17 (via kelch repeats); the interaction targets GRIK2 for degradation via ubiquitin-proteasome pathway. Post-translationally, sumoylation mediates kainate receptor-mediated endocytosis and regulates synaptic transmission. Sumoylation is enhanced by PIAS3 and desumoylated by SENP1. Ubiquitinated. Ubiquitination regulates the GRIK2 levels at the synapse by leading kainate receptor degradation through proteasome. In terms of processing, phosphorylated by PKC at Ser-868 upon agonist activation, this directly enhance sumoylation. In terms of tissue distribution, highest expression is found in the olfactory lobe, piriform cortex, dentate gyrus, hippocampus, granular cell layer of the cerebellum, and in caudate-putamen.

It is found in the cell membrane. Its subcellular location is the postsynaptic cell membrane. The catalysed reaction is Ca(2+)(in) = Ca(2+)(out). It catalyses the reaction Na(+)(in) = Na(+)(out). With respect to regulation, cold receptor activity activated by temperatures between 10-19 degrees Celsius. Functionally, ionotropic glutamate receptor that functions as a cation-permeable ligand-gated ion channel, gated by L-glutamate and the glutamatergic agonist kainic acid. L-glutamate acts as an excitatory neurotransmitter at many synapses in the central nervous system. Binding of the excitatory neurotransmitter L-glutamate induces a conformation change, leading to the opening of the cation channel, and thereby converts the chemical signal to an electrical impulse. The receptor then desensitizes rapidly and enters a transient inactive state, characterized by the presence of bound agonist. Modulates cell surface expression of NETO2. In association with GRIK3, involved in presynaptic facilitation of glutamate release at hippocampal mossy fiber synapses. Its function is as follows. Independent of its ionotropic glutamate receptor activity, acts as a thermoreceptor conferring sensitivity to cold temperatures. Functions in dorsal root ganglion neurons. This Rattus norvegicus (Rat) protein is Glutamate receptor ionotropic, kainate 2 (Grik2).